A 252-amino-acid chain; its full sequence is tRNA1(Val) (adenine(37)-N6)-methyltransferase (252 aa).

This sequence belongs to the methyltransferase superfamily. tRNA (adenine-N(6)-)-methyltransferase family.

The protein resides in the cytoplasm. It carries out the reaction adenosine(37) in tRNA1(Val) + S-adenosyl-L-methionine = N(6)-methyladenosine(37) in tRNA1(Val) + S-adenosyl-L-homocysteine + H(+). Functionally, specifically methylates the adenine in position 37 of tRNA(1)(Val) (anticodon cmo5UAC). This is tRNA1(Val) (adenine(37)-N6)-methyltransferase from Yersinia pseudotuberculosis serotype IB (strain PB1/+).